A 120-amino-acid chain; its full sequence is MKSSSELFERRRSRNRYQIRLKSAGRLRLSVFRSNKHMYAQIIDDAEGRTLVSASTVDKELRGNLTKGGDKAAAAEVGKLLAERAKAAGYTEVVFDRGGYKYHGRVQALADAAREAGLSF.

The protein belongs to the universal ribosomal protein uL18 family. Part of the 50S ribosomal subunit; part of the 5S rRNA/L5/L18/L25 subcomplex. Contacts the 5S and 23S rRNAs.

This is one of the proteins that bind and probably mediate the attachment of the 5S RNA into the large ribosomal subunit, where it forms part of the central protuberance. The protein is Large ribosomal subunit protein uL18 of Rhodospirillum rubrum (strain ATCC 11170 / ATH 1.1.1 / DSM 467 / LMG 4362 / NCIMB 8255 / S1).